The primary structure comprises 351 residues: Probable dual-specificity RNA methyltransferase RlmN (351 aa).

Catalysis depends on Glu98, which acts as the Proton acceptor. In terms of domain architecture, Radical SAM core spans 104 to 332 (TQKRLTVCVS…ASIRRSRGLD (229 aa)). Cysteines 111 and 337 form a disulfide. Cys118, Cys122, and Cys125 together coordinate [4Fe-4S] cluster. S-adenosyl-L-methionine-binding positions include 165 to 166 (GE), Ser195, 218 to 220 (SLH), and Asn294. Cys337 serves as the catalytic S-methylcysteine intermediate.

It belongs to the radical SAM superfamily. RlmN family. [4Fe-4S] cluster serves as cofactor.

The protein resides in the cytoplasm. It catalyses the reaction adenosine(2503) in 23S rRNA + 2 reduced [2Fe-2S]-[ferredoxin] + 2 S-adenosyl-L-methionine = 2-methyladenosine(2503) in 23S rRNA + 5'-deoxyadenosine + L-methionine + 2 oxidized [2Fe-2S]-[ferredoxin] + S-adenosyl-L-homocysteine. It carries out the reaction adenosine(37) in tRNA + 2 reduced [2Fe-2S]-[ferredoxin] + 2 S-adenosyl-L-methionine = 2-methyladenosine(37) in tRNA + 5'-deoxyadenosine + L-methionine + 2 oxidized [2Fe-2S]-[ferredoxin] + S-adenosyl-L-homocysteine. In terms of biological role, specifically methylates position 2 of adenine 2503 in 23S rRNA and position 2 of adenine 37 in tRNAs. The sequence is that of Probable dual-specificity RNA methyltransferase RlmN from Acaryochloris marina (strain MBIC 11017).